Consider the following 47-residue polypeptide: Protein 0.5 (47 aa).

The N-terminal stretch at 1 to 23 (MYMLTIGLLTALGLAVGASFGKA) is a signal peptide. Residues 24-43 (LGVAVGSYFTACIIIGIIKG) traverse the membrane as a helical segment.

It localises to the host membrane. The protein is Protein 0.5 of Escherichia phage T7 (Bacteriophage T7).